The sequence spans 591 residues: DDB1- and CUL4-associated factor 8 (591 aa).

Residues methionine 1–leucine 14 show a composition bias toward basic and acidic residues. A disordered region spans residues methionine 1–alanine 140. Serine 21 and serine 22 each carry phosphoserine. Positions isoleucine 39–leucine 50 match the Nuclear export signal motif. Composition is skewed to basic and acidic residues over residues arginine 65–serine 99 and serine 118–glutamate 131. Serine 99, serine 123, and serine 124 each carry phosphoserine. WD repeat units lie at residues glycine 185 to aspartate 224, glycine 228 to asparagine 269, glutamine 275 to lysine 315, glutamate 323 to asparagine 363, glutamate 379 to tyrosine 418, arginine 426 to phenylalanine 466, and aspartate 470 to leucine 509. Arginine 198 carries the omega-N-methylarginine; by PRMT1 modification. The tract at residues histidine 552–serine 591 is disordered.

This sequence belongs to the WD repeat DCAF8 family. As to quaternary structure, interacts with DDB1, CUL4A and CUL4B. Interacts with KPNA1, KPNB1 and XPO1.

The protein localises to the nucleus. It is found in the cytoplasm. It participates in protein modification; protein ubiquitination. May function as a substrate receptor for CUL4-DDB1 E3 ubiquitin-protein ligase complex. In Rattus norvegicus (Rat), this protein is DDB1- and CUL4-associated factor 8 (Dcaf8).